A 102-amino-acid chain; its full sequence is Small ubiquitin-related modifier 1 (102 aa).

One can recognise a Ubiquitin-like domain in the interval 21-98 (DYIKLKVIGQ…IEVYQEQTGG (78 aa)). G98 participates in a covalent cross-link: Glycyl lysine isopeptide (Gly-Lys) (interchain with K-? in acceptor proteins). Positions 99-102 (HSTI) are excised as a propeptide.

The protein belongs to the ubiquitin family. SUMO subfamily. As to quaternary structure, interacts with sae2, ube2i, ranbp2, pias1 and pias2. Interacts with sox9 and sox10. Covalently attached to a number of proteins. Cleavage of precursor form by a sentrin-specific protease is necessary for function.

It is found in the nucleus membrane. The protein resides in the nucleus speckle. Its subcellular location is the cytoplasm. The protein localises to the nucleus. It localises to the PML body. It is found in the cell membrane. Ubiquitin-like protein that can be covalently attached to proteins as a monomer or a lysine-linked polymer. Covalent attachment via an isopeptide bond to its substrates requires prior activation by the E1 complex sae1-sae2 and linkage to the E2 enzyme ube2i. This post-translational modification on lysine residues of proteins plays a crucial role in a number of cellular processes such as nuclear transport, DNA replication and repair, mitosis and signal transduction. Polymeric sumo1 chains are also susceptible to polyubiquitination which functions as a signal for proteasomal degradation of modified proteins. The chain is Small ubiquitin-related modifier 1 (sumo1) from Xenopus tropicalis (Western clawed frog).